Consider the following 182-residue polypeptide: Adenine phosphoribosyltransferase (182 aa).

This sequence belongs to the purine/pyrimidine phosphoribosyltransferase family. In terms of assembly, homodimer.

Its subcellular location is the cytoplasm. The catalysed reaction is AMP + diphosphate = 5-phospho-alpha-D-ribose 1-diphosphate + adenine. Its pathway is purine metabolism; AMP biosynthesis via salvage pathway; AMP from adenine: step 1/1. Functionally, catalyzes a salvage reaction resulting in the formation of AMP, that is energically less costly than de novo synthesis. The sequence is that of Adenine phosphoribosyltransferase from Campylobacter curvus (strain 525.92).